We begin with the raw amino-acid sequence, 152 residues long: Small ribosomal subunit protein uS15 (152 aa).

Basic residues predominate over residues 1-11 (MAKMHTKRKGK). Residues 1-24 (MAKMHTKRKGKSSSTRPNRTEPPE) are disordered.

The protein belongs to the universal ribosomal protein uS15 family. As to quaternary structure, part of the 30S ribosomal subunit.

In Methanosarcina mazei (strain ATCC BAA-159 / DSM 3647 / Goe1 / Go1 / JCM 11833 / OCM 88) (Methanosarcina frisia), this protein is Small ribosomal subunit protein uS15.